The chain runs to 237 residues: Ribose-5-phosphate isomerase A (237 aa).

Substrate-binding positions include Thr-33–Thr-36, Asp-90–Asp-93, and Lys-103–Gly-106. Glu-112 (proton acceptor) is an active-site residue. Residue Lys-130 participates in substrate binding.

The protein belongs to the ribose 5-phosphate isomerase family. As to quaternary structure, homodimer.

The catalysed reaction is aldehydo-D-ribose 5-phosphate = D-ribulose 5-phosphate. It functions in the pathway carbohydrate degradation; pentose phosphate pathway; D-ribose 5-phosphate from D-ribulose 5-phosphate (non-oxidative stage): step 1/1. Its function is as follows. Catalyzes the reversible conversion of ribose-5-phosphate to ribulose 5-phosphate. The protein is Ribose-5-phosphate isomerase A of Trichodesmium erythraeum (strain IMS101).